The chain runs to 208 residues: Uracil phosphoribosyltransferase (208 aa).

Residues Arg78, Arg103, and 130–138 (DPMLATGGS) each bind 5-phospho-alpha-D-ribose 1-diphosphate. Uracil is bound by residues Ile193 and 198–200 (GDA). Asp199 serves as a coordination point for 5-phospho-alpha-D-ribose 1-diphosphate.

The protein belongs to the UPRTase family. It depends on Mg(2+) as a cofactor.

It carries out the reaction UMP + diphosphate = 5-phospho-alpha-D-ribose 1-diphosphate + uracil. It participates in pyrimidine metabolism; UMP biosynthesis via salvage pathway; UMP from uracil: step 1/1. Allosterically activated by GTP. Catalyzes the conversion of uracil and 5-phospho-alpha-D-ribose 1-diphosphate (PRPP) to UMP and diphosphate. The chain is Uracil phosphoribosyltransferase from Neisseria meningitidis serogroup B (strain ATCC BAA-335 / MC58).